Consider the following 1021-residue polypeptide: Replication factor C subunit 1 (1021 aa).

2 disordered regions span residues 1–259 (MSSD…EGAP) and 339–392 (PAKA…GSAS). Over residues 90-110 (KVSDELEDDMKPLPAKEVHKE) the composition is skewed to basic and acidic residues. Residues 123–138 (SKRKTPVKPPPSKKLK) show a composition bias toward basic residues. Acidic residues predominate over residues 197-207 (LDDDGEEDKMD). Residues 219–236 (RGRGGASGGRGRGGGGRG) are compositionally biased toward gly residues. Composition is skewed to basic and acidic residues over residues 241 to 255 (GERK…KEVP) and 347 to 357 (HQSDKNSEKQQ). Residues 257 to 347 (GAPDCLTGLT…KPAKATVAKH (91 aa)) enclose the BRCT domain. Over residues 374–392 (NQITTGKNISPKSNKGSAS) the composition is skewed to polar residues. 465–472 (SGPPGIGK) contributes to the ATP binding site. Positions 931–1021 (VGESLPEENG…AGGSGGKRKR (91 aa)) are disordered. Over residues 945–958 (EGDEEDSSDAENND) the composition is skewed to acidic residues. Residues 965–977 (TKPKLDLQSDKKK) show a composition bias toward basic and acidic residues. Residues 999–1010 (AGRSKASGSAGK) are compositionally biased toward low complexity. Over residues 1011–1021 (AAGGSGGKRKR) the composition is skewed to gly residues.

This sequence belongs to the activator 1 large subunit family. As to quaternary structure, heterotetramer of subunits RFC2, RFC3, RFC4 and RFC5 that can form a complex with RFC1. As to expression, expressed in roots, leaves, shoot apical meristem (SAM), flag leaves and panicles.

The protein localises to the nucleus. Its function is as follows. May be involved in DNA replication and thus regulate cell proliferation. This chain is Replication factor C subunit 1 (RFC1), found in Oryza sativa subsp. japonica (Rice).